A 296-amino-acid chain; its full sequence is Co-chaperone protein DjlA (296 aa).

Topologically, residues 1–15 are periplasmic; the sequence is MNLRDFFVITTWWGK. Residues 16-39 form a helical membrane-spanning segment; the sequence is ILGAFFGYLTAGPVGALFGILVGN. The Cytoplasmic portion of the chain corresponds to 40–296; sequence FFDRGLVSYY…YELICETKGW (257 aa). Residues 200–225 form a disordered region; the sequence is QHYHNQQEYKHTSSSQGQQGYKPQSP. Residues 211 to 221 show a composition bias toward polar residues; that stretch reads TSSSQGQQGYK. Positions 231–296 constitute a J domain; the sequence is HAFALLEVSP…YELICETKGW (66 aa).

As to quaternary structure, homodimer.

It is found in the cell inner membrane. In terms of biological role, regulatory DnaK co-chaperone. Direct interaction between DnaK and DjlA is needed for the induction of the wcaABCDE operon, involved in the synthesis of a colanic acid polysaccharide capsule, possibly through activation of the RcsB/RcsC phosphotransfer signaling pathway. The colanic acid capsule may help the bacterium survive conditions outside the host. This is Co-chaperone protein DjlA from Legionella pneumophila subsp. pneumophila (strain Philadelphia 1 / ATCC 33152 / DSM 7513).